The chain runs to 254 residues: MLTIGGKQFQSRLLLGTGKYPSFEIQKEAVAVSESDILTFAVRRMNIFEESQPNFLEQLDLSKYTLLPNTAGAATAEEAVRIARLAKASGLCDMIKVEVIGCSRSLLPDPVETLKASEQLLEEGFIVLPYTSDDVVLARRLEELGVHAIMPGASPIGSGQGILNPLNLSFIIEQAKVPVIVDAGVGSSKDAAYAMELGADGVLLNTAVSGADDPVKMARAMKLAVEAGRLSYEAGRIPVKDYGTASSPRDGLPV.

K96 (schiff-base intermediate with DXP) is an active-site residue. 1-deoxy-D-xylulose 5-phosphate is bound by residues G157, A183–G184, and N205–T206.

Belongs to the ThiG family. Homotetramer. Forms heterodimers with either ThiH or ThiS.

It localises to the cytoplasm. It carries out the reaction [ThiS sulfur-carrier protein]-C-terminal-Gly-aminoethanethioate + 2-iminoacetate + 1-deoxy-D-xylulose 5-phosphate = [ThiS sulfur-carrier protein]-C-terminal Gly-Gly + 2-[(2R,5Z)-2-carboxy-4-methylthiazol-5(2H)-ylidene]ethyl phosphate + 2 H2O + H(+). The protein operates within cofactor biosynthesis; thiamine diphosphate biosynthesis. In terms of biological role, catalyzes the rearrangement of 1-deoxy-D-xylulose 5-phosphate (DXP) to produce the thiazole phosphate moiety of thiamine. Sulfur is provided by the thiocarboxylate moiety of the carrier protein ThiS. In vitro, sulfur can be provided by H(2)S. This chain is Thiazole synthase, found in Bacillus velezensis (strain DSM 23117 / BGSC 10A6 / LMG 26770 / FZB42) (Bacillus amyloliquefaciens subsp. plantarum).